A 359-amino-acid chain; its full sequence is Probable L-ascorbate peroxidase 7, chloroplastic (359 aa).

Residues 1 to 71 constitute a chloroplast transit peptide; that stretch reads MAAQRLAALH…KAAGSGRSVM (71 aa). The Proton acceptor role is filled by His118. A heme b-binding site is contributed by His247. Thr248 contributes to the K(+) binding site. The interval 251–277 is disordered; the sequence is RSRPERSGWGKPETKYTKNGPGAPGGQ. A compositionally biased stretch (basic and acidic residues) spans 252-266; that stretch reads SRPERSGWGKPETKY. Residues Thr280 and Asp287 each coordinate K(+).

The protein belongs to the peroxidase family. Ascorbate peroxidase subfamily. Requires heme b as cofactor. As to expression, expressed in roots, leaves, stems and flowers.

The protein localises to the plastid. It localises to the chloroplast stroma. It catalyses the reaction L-ascorbate + H2O2 = L-dehydroascorbate + 2 H2O. In terms of biological role, plays a key role in hydrogen peroxide removal. In Oryza sativa subsp. japonica (Rice), this protein is Probable L-ascorbate peroxidase 7, chloroplastic.